Reading from the N-terminus, the 186-residue chain is Probable GPI-anchored cupredoxin ARB_05732-1 (186 aa).

The signal sequence occupies residues 1–18 (MVNMNILTTVALAGLAAA). Residue His-55 coordinates Cu cation. Cys-66 and Cys-104 are disulfide-bonded. N-linked (GlcNAc...) asparagine glycosylation occurs at Asn-87. Cu cation is bound by residues Cys-98 and His-103. The disordered stretch occupies residues 130-160 (GAGNGQAPSRVNNGSSGSGTPTSGGAPAATS). Asn-142 is a glycosylation site (N-linked (GlcNAc...) asparagine). Residues 143–160 (GSSGSGTPTSGGAPAATS) are compositionally biased toward low complexity. The GPI-anchor amidated glycine moiety is linked to residue Gly-153. The propeptide at 154–186 (GAPAATSPNAASSLTFSGAAALVAMGGAWIGLL) is removed in mature form.

This sequence belongs to the multicopper oxidase family. Cu cation serves as cofactor.

The protein resides in the cell membrane. Its subcellular location is the secreted. Functionally, probable electron transfer copper protein that serves as a direct electron donor. The sequence is that of Probable GPI-anchored cupredoxin ARB_05732-1 from Arthroderma benhamiae (strain ATCC MYA-4681 / CBS 112371) (Trichophyton mentagrophytes).